Here is a 96-residue protein sequence, read N- to C-terminus: UPF0235 protein CKO_04329 (96 aa).

It belongs to the UPF0235 family.

This chain is UPF0235 protein CKO_04329, found in Citrobacter koseri (strain ATCC BAA-895 / CDC 4225-83 / SGSC4696).